Consider the following 333-residue polypeptide: Ribosomal RNA large subunit methyltransferase F (333 aa).

Residues 1–10 are compositionally biased toward basic residues; it reads MPQPPKRPRK. The segment at 1 to 31 is disordered; it reads MPQPPKRPRKPAPAAVKTAPAKGELHPRNRH. Over residues 12-22 the composition is skewed to low complexity; the sequence is APAAVKTAPAK.

This sequence belongs to the methyltransferase superfamily. METTL16/RlmF family.

It is found in the cytoplasm. The enzyme catalyses adenosine(1618) in 23S rRNA + S-adenosyl-L-methionine = N(6)-methyladenosine(1618) in 23S rRNA + S-adenosyl-L-homocysteine + H(+). In terms of biological role, specifically methylates the adenine in position 1618 of 23S rRNA. The sequence is that of Ribosomal RNA large subunit methyltransferase F from Ectopseudomonas mendocina (strain ymp) (Pseudomonas mendocina).